A 146-amino-acid chain; its full sequence is MYNTDYKKYNVDIFHPAHFEDIQEESADCGPNVQEVRQFLESNRLEYALQSVLLNPPFGHSEQELKNRAVLLVAEVIHAFRQTDIEESVHKLSNENGDILMKYIYKAMQLCSDSATCLSLLLWHSQLVSKFGQGSIVRVLSNRQRL.

This sequence belongs to the ARPC5 family. Component of the Arp2/3 complex composed of ARP2, ARP3, ARPC1B/p41-ARC, ARPC2/p34-ARC, ARPC3/p21-ARC, ARPC4/p20-ARC and ARPC5/p16-ARC.

The protein resides in the cytoplasm. The protein localises to the cytoskeleton. In terms of biological role, functions as a component of the Arp2/3 complex which is involved in regulation of actin polymerization and together with an activating nucleation-promoting factor (NPF) mediates the formation of branched actin networks. This chain is Probable actin-related protein 2/3 complex subunit 5, found in Caenorhabditis elegans.